Reading from the N-terminus, the 122-residue chain is uncharacterized protein (122 aa).

A coiled-coil region spans residues 46-116; sequence KDLQKEVDDL…HQLENKRELN (71 aa).

This is an uncharacterized protein from Invertebrate iridescent virus 6 (IIV-6).